A 239-amino-acid polypeptide reads, in one-letter code: Tetraspanin-9 (239 aa).

Residues 1–13 (MARGCLCCLKYMM) lie on the Cytoplasmic side of the membrane. The helical transmembrane segment at 14 to 34 (FLFNLIFWLCGCGLLGVGIWL) threads the bilayer. Over 35-55 (SVSQGNFATFSPSFPSLSAAN) the chain is Extracellular. The helical transmembrane segment at 56–76 (LVIVIGTVVMVTGFLGCLGAI) threads the bilayer. The Cytoplasmic portion of the chain corresponds to 77–85 (KENKCLLLS). The chain crosses the membrane as a helical span at residues 86–106 (FFIILLIILLTELILLILFFV). The Extracellular portion of the chain corresponds to 107-203 (YMDKVNENAK…VKMWFDDNKH (97 aa)). Asn-180 carries an N-linked (GlcNAc...) asparagine glycan. The helical transmembrane segment at 204-224 (VLGTIGMCILIIQILGMAFSM) threads the bilayer. Topologically, residues 225-239 (TLFQQIHRTGKKYDA) are cytoplasmic.

The protein belongs to the tetraspanin (TM4SF) family.

It localises to the membrane. This Xenopus laevis (African clawed frog) protein is Tetraspanin-9 (tspan9).